We begin with the raw amino-acid sequence, 519 residues long: Probable cytochrome P450 6g2 (519 aa).

Cysteine 460 lines the heme pocket.

The protein belongs to the cytochrome P450 family. Heme is required as a cofactor.

The protein localises to the endoplasmic reticulum membrane. Its subcellular location is the microsome membrane. May be involved in the metabolism of insect hormones and in the breakdown of synthetic insecticides. The sequence is that of Probable cytochrome P450 6g2 (Cyp6g2) from Drosophila melanogaster (Fruit fly).